The following is a 77-amino-acid chain: Translation initiation factor IF-1, chloroplastic (77 aa).

An S1-like domain is found at 1–71 (MKEQKWIHEG…TRGRIIYRLR (71 aa)).

This sequence belongs to the IF-1 family. In terms of assembly, component of the 30S ribosomal translation pre-initiation complex which assembles on the 30S ribosome in the order IF-2 and IF-3, IF-1 and N-formylmethionyl-tRNA(fMet); mRNA recruitment can occur at any time during PIC assembly.

The protein localises to the plastid. It is found in the chloroplast. In terms of biological role, one of the essential components for the initiation of protein synthesis. Stabilizes the binding of IF-2 and IF-3 on the 30S subunit to which N-formylmethionyl-tRNA(fMet) subsequently binds. Helps modulate mRNA selection, yielding the 30S pre-initiation complex (PIC). Upon addition of the 50S ribosomal subunit IF-1, IF-2 and IF-3 are released leaving the mature 70S translation initiation complex. The polypeptide is Translation initiation factor IF-1, chloroplastic (Spinacia oleracea (Spinach)).